The sequence spans 1444 residues: Probable chitinase LysM18 (1444 aa).

LysM domains lie at 256 to 302 (STVQ…HFCC) and 321 to 369 (TTYT…IICL). One can recognise a Chitin-binding type-1 domain in the interval 382–450 (NAECGPQVPG…TNGCISNCGT (69 aa)). Disulfide bonds link cysteine 385-cysteine 413, cysteine 407-cysteine 419, cysteine 412-cysteine 426, and cysteine 444-cysteine 448. The GH18 domain maps to 461-831 (YRKVGFYEGF…STSWTKFTSD (371 aa)). Residue glutamate 582 is the Proton donor of the active site. Residues tyrosine 583 and tryptophan 808 each contribute to the chitin site.

Belongs to the glycosyl hydrolase 18 family. Chitinase class V subfamily.

It carries out the reaction Random endo-hydrolysis of N-acetyl-beta-D-glucosaminide (1-&gt;4)-beta-linkages in chitin and chitodextrins.. Its function is as follows. Probable chitinase involved in the degradation of chitin, a component of the cell walls of fungi and exoskeletal elements of some animals (including worms and arthropods). Might be involved in manipulation of host defenses for successful infection. This chain is Probable chitinase LysM18, found in Penicillium expansum (Blue mold rot fungus).